The following is a 338-amino-acid chain: 1-aminocyclopropane-1-carboxylate deaminase (338 aa).

Lysine 51 is subject to N6-(pyridoxal phosphate)lysine. The active-site Nucleophile is the serine 78.

It belongs to the ACC deaminase/D-cysteine desulfhydrase family. In terms of assembly, homotrimer. Pyridoxal 5'-phosphate is required as a cofactor.

The enzyme catalyses 1-aminocyclopropane-1-carboxylate + H2O = 2-oxobutanoate + NH4(+). Its function is as follows. Catalyzes a cyclopropane ring-opening reaction, the irreversible conversion of 1-aminocyclopropane-1-carboxylate (ACC) to ammonia and alpha-ketobutyrate. Allows growth on ACC as a nitrogen source. The protein is 1-aminocyclopropane-1-carboxylate deaminase of Burkholderia multivorans (strain ATCC 17616 / 249).